The chain runs to 82 residues: Turripeptide IX-04 (82 aa).

An N-terminal signal peptide occupies residues 1-21 (MGFYMLLTVALLLTSLMNVEA). The propeptide occupies 22-39 (TPVDQAERSALEKSGLGN). 3 disulfide bridges follow: C48-C70, C55-C74, and C60-C81.

In terms of tissue distribution, expressed by the venom duct.

The protein localises to the secreted. The protein is Turripeptide IX-04 of Gemmula speciosa (Splendid gem-turris).